The primary structure comprises 348 residues: Phage-like element PBSX protein XkdT (348 aa).

The protein belongs to the Mu gp47/PBSX XkdT family.

In Bacillus subtilis (strain 168), this protein is Phage-like element PBSX protein XkdT (xkdT).